Consider the following 692-residue polypeptide: Elongation factor G (692 aa).

In terms of domain architecture, tr-type G spans 8–283 (NRIRNIGIAA…AVIDYLPAPT (276 aa)). GTP-binding positions include 17 to 24 (AHIDAGKT), 81 to 85 (DTPGH), and 135 to 138 (NKMD).

This sequence belongs to the TRAFAC class translation factor GTPase superfamily. Classic translation factor GTPase family. EF-G/EF-2 subfamily.

Its subcellular location is the cytoplasm. Functionally, catalyzes the GTP-dependent ribosomal translocation step during translation elongation. During this step, the ribosome changes from the pre-translocational (PRE) to the post-translocational (POST) state as the newly formed A-site-bound peptidyl-tRNA and P-site-bound deacylated tRNA move to the P and E sites, respectively. Catalyzes the coordinated movement of the two tRNA molecules, the mRNA and conformational changes in the ribosome. This is Elongation factor G (fusA) from Helicobacter pylori (strain ATCC 700392 / 26695) (Campylobacter pylori).